The chain runs to 118 residues: Transcriptional regulator WhiB4 (118 aa).

The 57-residue stretch at 36-92 (LCRTTDPDELFVRGAAQRKAAVICRHCPVMQECAADALDNKVEFGVWGGMTERQRRA) folds into the 4Fe-4S Wbl-type domain. Positions 37, 59, 62, and 68 each coordinate [4Fe-4S] cluster. 2 disulfides stabilise this stretch: cysteine 37–cysteine 68 and cysteine 59–cysteine 62.

Belongs to the WhiB family. [4Fe-4S] cluster serves as cofactor. In terms of processing, the Fe-S cluster can be nitrosylated by nitric oxide (NO). Post-translationally, upon Fe-S cluster removal intramolecular disulfide bonds are formed.

The protein resides in the cytoplasm. Functionally, acts as a transcriptional regulator. Probably redox-responsive. The apo- but not holo-form probably binds DNA. In Mycobacterium tuberculosis (strain CDC 1551 / Oshkosh), this protein is Transcriptional regulator WhiB4 (whiB4).